We begin with the raw amino-acid sequence, 463 residues long: Glutamate--tRNA ligase (463 aa).

The 'HIGH' region motif lies at 10–20 (PSPTGHLHIGG). Positions 236-240 (KLSKR) match the 'KMSKS' region motif. Lysine 239 serves as a coordination point for ATP.

It belongs to the class-I aminoacyl-tRNA synthetase family. Glutamate--tRNA ligase type 1 subfamily. In terms of assembly, monomer.

The protein localises to the cytoplasm. The enzyme catalyses tRNA(Glu) + L-glutamate + ATP = L-glutamyl-tRNA(Glu) + AMP + diphosphate. Its function is as follows. Catalyzes the attachment of glutamate to tRNA(Glu) in a two-step reaction: glutamate is first activated by ATP to form Glu-AMP and then transferred to the acceptor end of tRNA(Glu). This Nitratidesulfovibrio vulgaris (strain ATCC 29579 / DSM 644 / CCUG 34227 / NCIMB 8303 / VKM B-1760 / Hildenborough) (Desulfovibrio vulgaris) protein is Glutamate--tRNA ligase.